The primary structure comprises 260 residues: 4-hydroxy-tetrahydrodipicolinate reductase (260 aa).

NAD(+)-binding positions include 8–13 (GAAGRM), Glu35, 91–93 (GTT), and 115–118 (APNM). His148 functions as the Proton donor/acceptor in the catalytic mechanism. His149 lines the (S)-2,3,4,5-tetrahydrodipicolinate pocket. Lys152 serves as the catalytic Proton donor. Residue 158–159 (GT) coordinates (S)-2,3,4,5-tetrahydrodipicolinate.

The protein belongs to the DapB family.

Its subcellular location is the cytoplasm. The enzyme catalyses (S)-2,3,4,5-tetrahydrodipicolinate + NAD(+) + H2O = (2S,4S)-4-hydroxy-2,3,4,5-tetrahydrodipicolinate + NADH + H(+). The catalysed reaction is (S)-2,3,4,5-tetrahydrodipicolinate + NADP(+) + H2O = (2S,4S)-4-hydroxy-2,3,4,5-tetrahydrodipicolinate + NADPH + H(+). Its pathway is amino-acid biosynthesis; L-lysine biosynthesis via DAP pathway; (S)-tetrahydrodipicolinate from L-aspartate: step 4/4. In terms of biological role, catalyzes the conversion of 4-hydroxy-tetrahydrodipicolinate (HTPA) to tetrahydrodipicolinate. The protein is 4-hydroxy-tetrahydrodipicolinate reductase of Rubrobacter xylanophilus (strain DSM 9941 / JCM 11954 / NBRC 16129 / PRD-1).